Here is a 1008-residue protein sequence, read N- to C-terminus: Probable beta-galactosidase B (1008 aa).

A signal peptide spans 1 to 18; it reads MLLQSLFAWALAIGPCIA. 2 N-linked (GlcNAc...) asparagine glycosylation sites follow: asparagine 20 and asparagine 23. Tyrosine 87 provides a ligand contact to substrate. Asparagine 108 carries N-linked (GlcNAc...) asparagine glycosylation. 4 residues coordinate substrate: asparagine 132, alanine 133, glutamate 134, and asparagine 192. The active-site Proton donor is the glutamate 193. A glycan (N-linked (GlcNAc...) asparagine) is linked at asparagine 208. Tyrosine 262 is a substrate binding site. An intrachain disulfide couples cysteine 268 to cysteine 321. N-linked (GlcNAc...) asparagine glycosylation is present at asparagine 269. The Nucleophile role is filled by glutamate 305. Tyrosine 370 contacts substrate. Asparagine 453, asparagine 594, asparagine 624, asparagine 681, asparagine 703, asparagine 782, asparagine 788, asparagine 816, asparagine 826, and asparagine 879 each carry an N-linked (GlcNAc...) asparagine glycan.

It belongs to the glycosyl hydrolase 35 family.

It localises to the secreted. It carries out the reaction Hydrolysis of terminal non-reducing beta-D-galactose residues in beta-D-galactosides.. Its function is as follows. Cleaves beta-linked terminal galactosyl residues from gangliosides, glycoproteins, and glycosaminoglycans. The polypeptide is Probable beta-galactosidase B (lacB) (Sclerotinia sclerotiorum (strain ATCC 18683 / 1980 / Ss-1) (White mold)).